The chain runs to 436 residues: MPKPVIAIVGRPNVGKSTIFNRIVGERVSIVEDIPGVTRDRIYSAGEWLNHEFNIIDTGGIDIGDEPFLTQIRQQAEVAIDEADVIIFMTNGRDGVTAADEEVAKILYRSNKPVVLAVNKVDNPEMRSDIYDFYALGFGEPFPISGTHGLGLGDLLDEAAQHFPKIEEDGYDEDTIRFSLIGRPNVGKSSLVNALLGQERVIVSNVAGTTRDAVDTPYSKDGKDYVIIDTAGMRKKGKVYESTEKYSVLRALRAIERSDVVLVVLDGEEGIIEQDKKIAGYAHDSGRAVVIVVNKWDAVKKDEKTMKAFEENIRAHFQFLEYAPIVFLSAKTRKRTQTLIPVIDEVNESHSIRIQTNVLNDVIMDAVAMNPTPTHNGSRLKIFYATQVAVKPPTFVVFVNDPELLHFSYERFLKNRLRESFGFVGTPIHIIARARD.

EngA-type G domains are found at residues 4–167 (PVIA…PKIE) and 176–351 (IRFS…ESHS). GTP contacts are provided by residues 10–17 (GRPNVGKS), 57–61 (DTGGI), 119–122 (NKVD), 182–189 (GRPNVGKS), 229–233 (DTAGM), and 294–297 (NKWD). One can recognise a KH-like domain in the interval 352–436 (IRIQTNVLND…PIHIIARARD (85 aa)).

This sequence belongs to the TRAFAC class TrmE-Era-EngA-EngB-Septin-like GTPase superfamily. EngA (Der) GTPase family. Associates with the 50S ribosomal subunit.

Functionally, GTPase that plays an essential role in the late steps of ribosome biogenesis. The polypeptide is GTPase Der (Bacillus anthracis (strain A0248)).